A 187-amino-acid polypeptide reads, in one-letter code: Calcium and integrin-binding family member 2 (187 aa).

3 EF-hand domains span residues 66–101 (KENPFRNRIVESFSEDGQGNLSFNDFVDMFSVLSEM), 103–138 (PRELKAIYAFKIYDFNVDNYICKEDLEKTLNKLTKE), and 144–179 (EVNLVCEKAIEEADLDGDNKLSFADFENMISRAPDF). Asp157, Asp159, Asp161, Lys163, and Asp168 together coordinate Ca(2+).

Monomer. Homodimer. Enriched in central and striolar hair cells.

The protein resides in the cytoplasm. It localises to the cell projection. The protein localises to the stereocilium. It is found in the photoreceptor inner segment. Its subcellular location is the cilium. The protein resides in the photoreceptor outer segment. It localises to the cell membrane. The protein localises to the sarcolemma. Functionally, calcium- and integrin-binding protein. Plays a role in intracellular calcium homeostasis. Critical for proper photoreceptor cell maintenance and function. Essential for development, maintenance and function of mechanosensory hair cells. The polypeptide is Calcium and integrin-binding family member 2 (Danio rerio (Zebrafish)).